The chain runs to 115 residues: Small ribosomal subunit protein bS16 (115 aa).

The disordered stretch occupies residues 81–115 (GLAPKPTYNEQPKKSAPKAKAQERAKAAADAAAAA).

This sequence belongs to the bacterial ribosomal protein bS16 family.

The chain is Small ribosomal subunit protein bS16 from Gluconobacter oxydans (strain 621H) (Gluconobacter suboxydans).